A 298-amino-acid polypeptide reads, in one-letter code: Cyclin-C (298 aa).

The region spanning 46–162 is the Cyclin N-terminal domain; that stretch reads NFITAVATEC…ILDCCLVVHH (117 aa). Positions 278 to 298 are disordered; sequence KLPKPNTPIPPPQQQQSSYHM.

Belongs to the cyclin family. Cyclin C subfamily. Component of the Mediator complex.

It localises to the nucleus. Its function is as follows. Component of the Mediator complex, a coactivator involved in regulated gene transcription of nearly all RNA polymerase II-dependent genes. Mediator functions as a bridge to convey information from gene-specific regulatory proteins to the basal RNA polymerase II transcription machinery. Mediator is recruited to promoters by direct interactions with regulatory proteins and serves as a scaffold for the assembly of a functional preinitiation complex with RNA polymerase II and the general transcription factors. Binds to and activates cyclin-dependent kinase cdk-8 that phosphorylates the CTD (C-terminal domain) of the large subunit of RNA polymerase II (RNAp II), which may inhibit the formation of a transcription initiation complex. The sequence is that of Cyclin-C (cic-1) from Caenorhabditis briggsae.